Here is a 573-residue protein sequence, read N- to C-terminus: Dilute domain-containing protein SPAC25B8.08 (573 aa).

The region spanning 180-464 (NAFLCEVNQV…LKKLDAFHEE (285 aa)) is the Dilute domain.

It localises to the cytoplasm. Its subcellular location is the golgi apparatus. This Schizosaccharomyces pombe (strain 972 / ATCC 24843) (Fission yeast) protein is Dilute domain-containing protein SPAC25B8.08.